The primary structure comprises 368 residues: Cobalt-precorrin-5B C(1)-methyltransferase (368 aa).

Belongs to the CbiD family.

It carries out the reaction Co-precorrin-5B + S-adenosyl-L-methionine = Co-precorrin-6A + S-adenosyl-L-homocysteine. Its pathway is cofactor biosynthesis; adenosylcobalamin biosynthesis; cob(II)yrinate a,c-diamide from sirohydrochlorin (anaerobic route): step 6/10. In terms of biological role, catalyzes the methylation of C-1 in cobalt-precorrin-5B to form cobalt-precorrin-6A. The sequence is that of Cobalt-precorrin-5B C(1)-methyltransferase from Brucella canis (strain ATCC 23365 / NCTC 10854 / RM-666).